The following is a 148-amino-acid chain: Small ribosomal subunit protein bS16 (148 aa).

The segment at 106–148 (QAAARAAAGAEDRPATTPKKAKKSGSAEEAEAAPATDAPAAGQ) is disordered. Residues 137 to 148 (AAPATDAPAAGQ) are compositionally biased toward low complexity.

This sequence belongs to the bacterial ribosomal protein bS16 family.

The polypeptide is Small ribosomal subunit protein bS16 (Frankia casuarinae (strain DSM 45818 / CECT 9043 / HFP020203 / CcI3)).